The following is a 96-amino-acid chain: Small ribosomal subunit protein bS6 (96 aa).

This sequence belongs to the bacterial ribosomal protein bS6 family.

Functionally, binds together with bS18 to 16S ribosomal RNA. In Streptomyces coelicolor (strain ATCC BAA-471 / A3(2) / M145), this protein is Small ribosomal subunit protein bS6 (rpsF).